Reading from the N-terminus, the 195-residue chain is ATP-dependent Clp protease proteolytic subunit 3 (195 aa).

The Nucleophile role is filled by Ser97. Residue His122 is part of the active site.

It belongs to the peptidase S14 family. As to quaternary structure, fourteen ClpP subunits assemble into 2 heptameric rings which stack back to back to give a disk-like structure with a central cavity, resembling the structure of eukaryotic proteasomes.

The protein resides in the cytoplasm. The catalysed reaction is Hydrolysis of proteins to small peptides in the presence of ATP and magnesium. alpha-casein is the usual test substrate. In the absence of ATP, only oligopeptides shorter than five residues are hydrolyzed (such as succinyl-Leu-Tyr-|-NHMec, and Leu-Tyr-Leu-|-Tyr-Trp, in which cleavage of the -Tyr-|-Leu- and -Tyr-|-Trp bonds also occurs).. Functionally, cleaves peptides in various proteins in a process that requires ATP hydrolysis. Has a chymotrypsin-like activity. Plays a major role in the degradation of misfolded proteins. The sequence is that of ATP-dependent Clp protease proteolytic subunit 3 from Rhizobium meliloti (strain 1021) (Ensifer meliloti).